Here is a 258-residue protein sequence, read N- to C-terminus: Regulatory protein RecX (258 aa).

It belongs to the RecX family.

It is found in the cytoplasm. Modulates RecA activity. This chain is Regulatory protein RecX, found in Streptococcus pneumoniae (strain Hungary19A-6).